The sequence spans 232 residues: MAKVGKRTRAAREAFVGKDMVSVEDAVALIKGAASAKFDETLEVAMNLGVDPRHADQMVRGVVTLPNGTGKTVRVAVFARGAKADEAKAAGADIVGAEDLMETIQSGKIEFDRCIATPDMMPLVGRLGKILGPRNLMPNPKVGTVTMDVAGAVGNAKGGEVQFKVEKAGVIHAGVGKISFDAEKLAQNVRAFVDAVNRAKPAGAKGTYLKKVSLSSTMGPGVSVDLASATSH.

Belongs to the universal ribosomal protein uL1 family. Part of the 50S ribosomal subunit.

Binds directly to 23S rRNA. The L1 stalk is quite mobile in the ribosome, and is involved in E site tRNA release. Its function is as follows. Protein L1 is also a translational repressor protein, it controls the translation of the L11 operon by binding to its mRNA. The sequence is that of Large ribosomal subunit protein uL1 from Cereibacter sphaeroides (strain ATCC 17025 / ATH 2.4.3) (Rhodobacter sphaeroides).